A 129-amino-acid chain; its full sequence is Small ribosomal subunit protein uS11 (129 aa).

Belongs to the universal ribosomal protein uS11 family. In terms of assembly, part of the 30S ribosomal subunit. Interacts with proteins S7 and S18. Binds to IF-3.

Functionally, located on the platform of the 30S subunit, it bridges several disparate RNA helices of the 16S rRNA. Forms part of the Shine-Dalgarno cleft in the 70S ribosome. This chain is Small ribosomal subunit protein uS11, found in Bacteroides thetaiotaomicron (strain ATCC 29148 / DSM 2079 / JCM 5827 / CCUG 10774 / NCTC 10582 / VPI-5482 / E50).